We begin with the raw amino-acid sequence, 214 residues long: MKAFTQHTGLVAPLDRANVDTDQIIPKQFLKSIKRTGFGPNLFDEWRYLDVGQPYQDNSKRPLNQEFVLNHERYQGASVLLARENFGCGSSREHAPWALDEYGFRSVIAPSFADIFFNNSFKNGLLPIILSDEEVEELFKQVEANPGYQLTIDLQAQAVTRPDGKVLHFEIDAFRKHCLLNGLDDIGLTLQDGEAIKAFEGKHRAAQPWLFRDA.

Belongs to the LeuD family. LeuD type 1 subfamily. Heterodimer of LeuC and LeuD.

The enzyme catalyses (2R,3S)-3-isopropylmalate = (2S)-2-isopropylmalate. It functions in the pathway amino-acid biosynthesis; L-leucine biosynthesis; L-leucine from 3-methyl-2-oxobutanoate: step 2/4. Catalyzes the isomerization between 2-isopropylmalate and 3-isopropylmalate, via the formation of 2-isopropylmaleate. This is 3-isopropylmalate dehydratase small subunit from Pseudomonas putida (strain W619).